Here is a 491-residue protein sequence, read N- to C-terminus: GTPase Der (491 aa).

EngA-type G domains lie at 3-166 and 200-373; these read PVVA…AEAM and IKLA…DSAT. Residues 9-16, 56-60, 118-121, 206-213, 253-257, and 318-321 each bind GTP; these read GRPNVGKS, DTGGI, NKVD, GKPNVGKS, DTAGV, and NKWD. Residues 374 to 458 form the KH-like domain; it reads RRVSTSMLTR…PIQIRFQEGD (85 aa). The interval 472 to 491 is disordered; sequence QERRRKRALSHINDRKTKGE.

The protein belongs to the TRAFAC class TrmE-Era-EngA-EngB-Septin-like GTPase superfamily. EngA (Der) GTPase family. In terms of assembly, associates with the 50S ribosomal subunit.

GTPase that plays an essential role in the late steps of ribosome biogenesis. The chain is GTPase Der from Shewanella denitrificans (strain OS217 / ATCC BAA-1090 / DSM 15013).